The following is a 364-amino-acid chain: Ribosomal RNA large subunit methyltransferase M (364 aa).

S-adenosyl-L-methionine is bound by residues serine 187, 220 to 223 (CPGG), aspartate 239, aspartate 259, and aspartate 276. Catalysis depends on lysine 305, which acts as the Proton acceptor.

This sequence belongs to the class I-like SAM-binding methyltransferase superfamily. RNA methyltransferase RlmE family. RlmM subfamily. In terms of assembly, monomer.

It localises to the cytoplasm. The enzyme catalyses cytidine(2498) in 23S rRNA + S-adenosyl-L-methionine = 2'-O-methylcytidine(2498) in 23S rRNA + S-adenosyl-L-homocysteine + H(+). Catalyzes the 2'-O-methylation at nucleotide C2498 in 23S rRNA. This chain is Ribosomal RNA large subunit methyltransferase M, found in Aeromonas salmonicida (strain A449).